The chain runs to 235 residues: Large ribosomal subunit protein uL1 (235 aa).

The protein belongs to the universal ribosomal protein uL1 family. Part of the 50S ribosomal subunit.

Its function is as follows. Binds directly to 23S rRNA. The L1 stalk is quite mobile in the ribosome, and is involved in E site tRNA release. Functionally, protein L1 is also a translational repressor protein, it controls the translation of the L11 operon by binding to its mRNA. The chain is Large ribosomal subunit protein uL1 from Mycobacterium marinum (strain ATCC BAA-535 / M).